The chain runs to 33 residues: GILDTLKNLAISAAKGAAQGLVNKASCKLSGQC.

Cys27 and Cys33 are joined by a disulfide.

It belongs to the frog skin active peptide (FSAP) family. Brevinin subfamily. As to expression, expressed by the skin glands.

The protein resides in the secreted. Functionally, shows antibacterial activity against representative Gram-negative and Gram-positive bacterial species, and hemolytic activity. This Pelophylax lessonae (Pool frog) protein is Brevinin-2Ea.